The sequence spans 557 residues: TBCC domain-containing protein 1 (557 aa).

The region spanning 290 to 435 (TTKRAKIACN…LEDHMARTGL (146 aa)) is the C-CAP/cofactor C-like domain.

It belongs to the TBCC family.

The protein localises to the cytoplasm. It localises to the cytoskeleton. It is found in the microtubule organizing center. The protein resides in the centrosome. Its subcellular location is the spindle pole. Functionally, plays a role in the regulation of centrosome and Golgi apparatus positioning, with consequences on cell shape and cell migration. The chain is TBCC domain-containing protein 1 (TBCCD1) from Bos taurus (Bovine).